We begin with the raw amino-acid sequence, 441 residues long: MSHEEDLIDYSDEELQTTDAAATTAAPAANGAQDKKGDLTVSGGRPDKKGSYVGIHSTGFRDFLLKGELLRAITDCGFEHPSEVQQVCIPTAILNVDVLCQAKSGLGKTAVFVLTTLHQLEPVPGECSVLVMCHTRELAYQIKNEYARFSKYLPDVKTAVFYGGTPIQKDVEVLSNKESYPNIVVGTPGRLNALVRDKKLSLRNVKAFVLDECDKMLDQIDMRRDVQEIFRATPADKQVMMFSATLSQEIRPICKKFMRNPLEVYVDDDTKLTLHGLQQYYIKLSESEKNRKLNELLDSLEFNQVIIFVKSTLRANELDKLLRECNFPSIAVHSGVSQEERIKRYKEFKEFNKRICVATDVFGRGIDIERINLAINYDLPADADSYLHRVGRAGRFGTKGLSISFVSNEDDEKVLKEIEKRFEVALPEYPEGGVDSSTYMA.

Residues D19 to A29 show a composition bias toward low complexity. The interval D19 to G43 is disordered. The Q motif motif lies at T58–Q86. One can recognise a Helicase ATP-binding domain in the interval I89–V264. Residue A102–T109 coordinates ATP. The short motif at D211–D214 is the DEAD box element. One can recognise a Helicase C-terminal domain in the interval G276–S437.

This sequence belongs to the DEAD box helicase family. DECD subfamily.

The protein localises to the nucleus. The enzyme catalyses ATP + H2O = ADP + phosphate + H(+). ATP-binding RNA helicase involved in transcription elongation and required for the export of mRNA out of the nucleus. SUB2 also plays a role in pre-mRNA splicing and spliceosome assembly. May be involved in rDNA and telomeric silencing, and maintenance of genome integrity. This Aspergillus clavatus (strain ATCC 1007 / CBS 513.65 / DSM 816 / NCTC 3887 / NRRL 1 / QM 1276 / 107) protein is ATP-dependent RNA helicase sub2 (sub2).